The primary structure comprises 155 residues: Secreted RxLR effector protein 38 (155 aa).

Residues 1-17 form the signal peptide; the sequence is MHLIYIVMAATATTLHA. Positions 49 to 64 match the RxLR-dEER motif; it reads RFLRGAYEDVHREEER.

This sequence belongs to the RxLR effector family.

The protein resides in the secreted. The protein localises to the host nucleus. It localises to the host cytoplasm. In terms of biological role, secreted effector that completely suppresses the host cell death induced by cell death-inducing proteins. The polypeptide is Secreted RxLR effector protein 38 (Plasmopara viticola (Downy mildew of grapevine)).